Reading from the N-terminus, the 214-residue chain is Probable transaldolase (214 aa).

The Schiff-base intermediate with substrate role is filled by Lys-83.

It belongs to the transaldolase family. Type 3B subfamily.

The protein resides in the cytoplasm. The catalysed reaction is D-sedoheptulose 7-phosphate + D-glyceraldehyde 3-phosphate = D-erythrose 4-phosphate + beta-D-fructose 6-phosphate. The protein operates within carbohydrate degradation; pentose phosphate pathway; D-glyceraldehyde 3-phosphate and beta-D-fructose 6-phosphate from D-ribose 5-phosphate and D-xylulose 5-phosphate (non-oxidative stage): step 2/3. Transaldolase is important for the balance of metabolites in the pentose-phosphate pathway. This is Probable transaldolase from Geobacter sp. (strain M21).